A 248-amino-acid polypeptide reads, in one-letter code: Sugar fermentation stimulation protein homolog (248 aa).

The protein belongs to the SfsA family.

The polypeptide is Sugar fermentation stimulation protein homolog (Prochlorococcus marinus subsp. pastoris (strain CCMP1986 / NIES-2087 / MED4)).